Reading from the N-terminus, the 482-residue chain is O-phosphoseryl-tRNA(Sec) selenium transferase (482 aa).

Residues 1-36 (MKSSFGKKEGEYSRLVSKSSNKLLNSLWEKKQIPEE) form a tetramerization region. A pyridoxal 5'-phosphate-binding site is contributed by Arg-69. Positions 90-100 (GRSGNLLEIQP) are phosphate loop (P-loop). Arg-91, Ser-92, and Gln-99 together coordinate substrate. Residue Lys-277 is modified to N6-(pyridoxal phosphate)lysine. Arg-306 is a binding site for substrate. Residue Arg-388 coordinates tRNA. The segment at 461–482 (DRRGGSSGRRVPMNESFDMEND) is disordered.

Belongs to the SepSecS family. In terms of assembly, homotetramer formed by a catalytic dimer and a non-catalytic dimer serving as a binding platform that orients tRNASec for catalysis. Each tetramer binds the CCA ends of two tRNAs which point to the active sites of the catalytic dimer. Pyridoxal 5'-phosphate serves as cofactor.

It localises to the cytoplasm. It catalyses the reaction O-phospho-L-seryl-tRNA(Sec) + selenophosphate + H2O = L-selenocysteinyl-tRNA(Sec) + 2 phosphate. The protein operates within aminoacyl-tRNA biosynthesis; selenocysteinyl-tRNA(Sec) biosynthesis; selenocysteinyl-tRNA(Sec) from L-seryl-tRNA(Sec) (archaeal/eukaryal route): step 2/2. Converts O-phosphoseryl-tRNA(Sec) to selenocysteinyl-tRNA(Sec) required for selenoprotein biosynthesis. This chain is O-phosphoseryl-tRNA(Sec) selenium transferase (secs-1), found in Caenorhabditis briggsae.